We begin with the raw amino-acid sequence, 527 residues long: Peptide chain release factor 3 (527 aa).

In terms of domain architecture, tr-type G spans 9–277 (AKRRTFAIIS…AVVNWAPMPL (269 aa)). GTP-binding positions include 18–25 (SHPDAGKT), 86–90 (DTPGH), and 140–143 (NKLD).

Belongs to the TRAFAC class translation factor GTPase superfamily. Classic translation factor GTPase family. PrfC subfamily.

The protein localises to the cytoplasm. Functionally, increases the formation of ribosomal termination complexes and stimulates activities of RF-1 and RF-2. It binds guanine nucleotides and has strong preference for UGA stop codons. It may interact directly with the ribosome. The stimulation of RF-1 and RF-2 is significantly reduced by GTP and GDP, but not by GMP. The chain is Peptide chain release factor 3 from Pseudomonas syringae pv. tomato (strain ATCC BAA-871 / DC3000).